The following is a 430-amino-acid chain: Histone acetyltransferase type B subunit 2 (430 aa).

WD repeat units lie at residues 129-169 (PHDG…ALTT), 180-220 (GHTA…FTSS), 233-273 (RHTD…EEEA), 279-319 (AHSK…QRLH), and 323-363 (GHED…EEQT). An interaction with the histone H4 N-terminus region spans residues 365 to 369 (EDAED). Residues 380 to 420 (GHTNRISEFSWCPNERWVVGSLADDNILQIWSPSRVIWGRD) form a WD 6 repeat. Ser-425 is modified (phosphoserine).

Belongs to the WD repeat RBAP46/RBAP48/MSI1 family. Component of the HAT-B complex composed of at least hat1 and hat2. The HAT-B complex binds to histone H4 tail. Component of the CENP-A recruiting complex composed of at least mis16, mis19, mis19 and mis20.

The protein localises to the cytoplasm. Its subcellular location is the nucleus. The protein resides in the chromosome. It is found in the centromere. It localises to the kinetochore. Its function is as follows. Regulatory subunit of the histone acetylase B (HAT-B) complex. The complex acetylates 'Lys-12' of histone H4 which is required for telomeric silencing. Component of the CENP-A recruiting complex that ensures the integrity of mitotic spindles through maintenance of kinetochore factors mis6/CENP-I and cnp1/CENP-A. Maintains the deacetylated state of histones specifically in the central core of the centromeres. The sequence is that of Histone acetyltransferase type B subunit 2 (mis16) from Schizosaccharomyces pombe (strain 972 / ATCC 24843) (Fission yeast).